Consider the following 298-residue polypeptide: ATP synthase gamma chain (298 aa).

The protein belongs to the ATPase gamma chain family. As to quaternary structure, F-type ATPases have 2 components, CF(1) - the catalytic core - and CF(0) - the membrane proton channel. CF(1) has five subunits: alpha(3), beta(3), gamma(1), delta(1), epsilon(1). CF(0) has three main subunits: a, b and c.

The protein localises to the cell inner membrane. Functionally, produces ATP from ADP in the presence of a proton gradient across the membrane. The gamma chain is believed to be important in regulating ATPase activity and the flow of protons through the CF(0) complex. In Zymomonas mobilis subsp. mobilis (strain ATCC 31821 / ZM4 / CP4), this protein is ATP synthase gamma chain.